Reading from the N-terminus, the 124-residue chain is Large ribosomal subunit protein bL12 (124 aa).

This sequence belongs to the bacterial ribosomal protein bL12 family. In terms of assembly, homodimer. Part of the ribosomal stalk of the 50S ribosomal subunit. Forms a multimeric L10(L12)X complex, where L10 forms an elongated spine to which 2 to 4 L12 dimers bind in a sequential fashion. Binds GTP-bound translation factors.

Functionally, forms part of the ribosomal stalk which helps the ribosome interact with GTP-bound translation factors. Is thus essential for accurate translation. The sequence is that of Large ribosomal subunit protein bL12 from Brucella anthropi (strain ATCC 49188 / DSM 6882 / CCUG 24695 / JCM 21032 / LMG 3331 / NBRC 15819 / NCTC 12168 / Alc 37) (Ochrobactrum anthropi).